Consider the following 196-residue polypeptide: Cupin-domain-containing oxidoreductase srdD (196 aa).

The tract at residues 99–165 is cupin-like domain; sequence DFGPGVESPL…GNGTLPGRVM (67 aa).

The protein belongs to the virC family.

Functionally, highly reducing polyketide synthase; part of the gene cluster that mediates the biosynthesis of sordarial, a salicylic aldehyde structurally related to the phytotoxin pyriculol. The most interesting aspect of this pathway is formation of an aromatic product from the highly reducing polyketide synthase srdA. SrdA synthesizes a reduced polyketide chain from one molecule of acetyl-CoA and five molecules of malonyl-CoA. The polyketide chain is then reductively released as an aldehyde. The oxidoreductases srdC, srdD and srdE then oxidize one of the hydroxy groups to facilitate the intramolecular aldol condensation, followed by dehydration to yield a salicylic aldehyde. This aldehyde can undergo facile reduction by endogenous reductases to yield the alcohol 1-hydroxy-2-hydroxymethyl-3-pent-1,3-dienylbenzene. The flavin-dependent srdI counteract against the propensity of the aldehydes to be reduced under physiological conditions and is responsible for reoxidizing 1-hydroxy-2-hydroxymethyl-3-pent-1,3-dienylbenzene back to the salicylic aldehyde. This salicylic aldehyde is then selectively epoxidized by the cupin-domain-containing oxidoreductase srdB to yield the epoxide, which can be hydrolyzed stereoselectively by the hydrolase srdG to give the final product sordarial. The protein is Cupin-domain-containing oxidoreductase srdD of Neurospora crassa (strain ATCC 24698 / 74-OR23-1A / CBS 708.71 / DSM 1257 / FGSC 987).